Here is a 476-residue protein sequence, read N- to C-terminus: Glycogen synthase (476 aa).

Position 15 (Lys-15) interacts with ADP-alpha-D-glucose.

This sequence belongs to the glycosyltransferase 1 family. Bacterial/plant glycogen synthase subfamily.

It catalyses the reaction [(1-&gt;4)-alpha-D-glucosyl](n) + ADP-alpha-D-glucose = [(1-&gt;4)-alpha-D-glucosyl](n+1) + ADP + H(+). Its pathway is glycan biosynthesis; glycogen biosynthesis. Synthesizes alpha-1,4-glucan chains using ADP-glucose. The protein is Glycogen synthase of Mycoplasma mobile (strain ATCC 43663 / 163K / NCTC 11711) (Mesomycoplasma mobile).